Here is a 208-residue protein sequence, read N- to C-terminus: 3-demethoxyubiquinol 3-hydroxylase (208 aa).

Residues E57, E87, H90, E139, E171, and H174 each coordinate Fe cation.

It belongs to the COQ7 family. The cofactor is Fe cation.

The protein resides in the cell membrane. The enzyme catalyses a 5-methoxy-2-methyl-3-(all-trans-polyprenyl)benzene-1,4-diol + AH2 + O2 = a 3-demethylubiquinol + A + H2O. Its pathway is cofactor biosynthesis; ubiquinone biosynthesis. Its function is as follows. Catalyzes the hydroxylation of 2-nonaprenyl-3-methyl-6-methoxy-1,4-benzoquinol during ubiquinone biosynthesis. This Verminephrobacter eiseniae (strain EF01-2) protein is 3-demethoxyubiquinol 3-hydroxylase.